Consider the following 282-residue polypeptide: UPF0294 protein VIBHAR_03217 (282 aa).

The protein belongs to the UPF0294 family.

It is found in the cytoplasm. The sequence is that of UPF0294 protein VIBHAR_03217 from Vibrio campbellii (strain ATCC BAA-1116).